The primary structure comprises 388 residues: GTPase Obg (388 aa).

The 159-residue stretch at 1 to 159 (MKFVDEAVIR…RSLKLELLLL (159 aa)) folds into the Obg domain. The region spanning 160 to 333 (ADVGLLGMPN…LATKLLDFIQ (174 aa)) is the OBG-type G domain. GTP is bound by residues 166–173 (GMPNAGKS), 191–195 (FTTLV), 213–216 (DIPG), 283–286 (NKAD), and 314–316 (SAY). Positions 173 and 193 each coordinate Mg(2+).

It belongs to the TRAFAC class OBG-HflX-like GTPase superfamily. OBG GTPase family. In terms of assembly, monomer. Requires Mg(2+) as cofactor.

It is found in the cytoplasm. Its function is as follows. An essential GTPase which binds GTP, GDP and possibly (p)ppGpp with moderate affinity, with high nucleotide exchange rates and a fairly low GTP hydrolysis rate. Plays a role in control of the cell cycle, stress response, ribosome biogenesis and in those bacteria that undergo differentiation, in morphogenesis control. The chain is GTPase Obg from Shewanella sp. (strain MR-4).